The chain runs to 473 residues: H(+)/Cl(-) exchange transporter ClcA (473 aa).

The Cytoplasmic portion of the chain corresponds to 1-32; the sequence is MKTDTPTFEAQQIVRLRRGRLIRRLVQRDKTP. A helical transmembrane segment spans residues 33 to 69; it reads LAILLMAAVVGTLTGLVGVAFEKAVSWVQNMRIGALV. Residues 70 to 76 are Periplasmic-facing; it reads QVADHAF. Residues 77 to 100 form a helical membrane-spanning segment; the sequence is LLWPLAFILSALLAMVGYFLVRKF. Residues 106-110 carry the Selectivity filter part_1 motif; sequence GSGIP. Ser-107 contacts chloride. The segment at residues 109–116 is an intramembrane region (helical); that stretch reads IPEIEGAL. Over 117 to 123 the chain is Cytoplasmic; it reads EELRPVR. The next 2 helical transmembrane spans lie at 124–141 and 148–166; these read WWRV…TLGA and EGPT…LDVF. Residues 146–150 carry the Selectivity filter part_2 motif; sequence GREGP. Residues 167 to 176 are Cytoplasmic-facing; it reads RMRSAEARHT. Intramembrane regions (helical) lie at residues 177 to 189 and 193 to 201; these read LLAT…LSAA and PLAGILFII. Topologically, residues 202 to 214 are cytoplasmic; that stretch reads EEMRPQFRYNLIS. Residues 215–232 form a helical membrane-spanning segment; the sequence is IKAVFTGVIMSSIVFRIF. Residues 233–252 are Periplasmic-facing; the sequence is NGEAPIIEVGKLSNAPVNTL. Residues 253-281 form a helical membrane-spanning segment; that stretch reads WLYLVLGIIFGCVGPVFNTLVLRTQDMFQ. Residues 282–287 are Cytoplasmic-facing; the sequence is RFHGGE. Residues 288-309 form a helical membrane-spanning segment; that stretch reads IKKWVLMGGAIGGLCGILGLIE. The Periplasmic portion of the chain corresponds to 310-329; sequence PEAAGGGFNLIPIAAAGNFS. Helical transmembrane passes span 330–349 and 355–376; these read VGLL…LCFS and GIFA…MAAA. The Selectivity filter part_3 signature appears at 355–359; sequence GIFAP. Ile-356 and Phe-357 together coordinate chloride. The Periplasmic segment spans residues 377–386; that stretch reads VLFPQYHLEA. The segment at residues 387-401 is an intramembrane region (helical); sequence GTFAIAGMGALMAAS. The segment at residues 402–404 is an intramembrane region (note=Loop between two helices); it reads VRA. Positions 405 to 416 form an intramembrane region, helical; it reads PLTGIVLVLEMT. Positions 417 to 421 form an intramembrane region, note=Loop between two helices; it reads DNYQL. Residues 422–438 form a helical membrane-spanning segment; that stretch reads ILPMIITCLGATLLAQF. Topologically, residues 439–473 are cytoplasmic; that stretch reads LGGKPLYSTILARTLAKQDAEQAAKNQSTPAGENT. Tyr-445 provides a ligand contact to chloride.

This sequence belongs to the chloride channel (TC 2.A.49) family. ClcA subfamily. In terms of assembly, homodimer.

It is found in the cell inner membrane. It carries out the reaction 2 chloride(in) + H(+)(out) = 2 chloride(out) + H(+)(in). In terms of biological role, proton-coupled chloride transporter. Functions as antiport system and exchanges two chloride ions for 1 proton. Probably acts as an electrical shunt for an outwardly-directed proton pump that is linked to amino acid decarboxylation, as part of the extreme acid resistance (XAR) response. This Salmonella arizonae (strain ATCC BAA-731 / CDC346-86 / RSK2980) protein is H(+)/Cl(-) exchange transporter ClcA.